Consider the following 357-residue polypeptide: Peptide chain release factor 1 (357 aa).

Gln-234 is modified (N5-methylglutamine).

It belongs to the prokaryotic/mitochondrial release factor family. In terms of processing, methylated by PrmC. Methylation increases the termination efficiency of RF1.

It localises to the cytoplasm. Its function is as follows. Peptide chain release factor 1 directs the termination of translation in response to the peptide chain termination codons UAG and UAA. In Alkaliphilus oremlandii (strain OhILAs) (Clostridium oremlandii (strain OhILAs)), this protein is Peptide chain release factor 1.